Consider the following 367-residue polypeptide: Alginate lyase (367 aa).

An N-terminal signal peptide occupies residues 1-27 (MKTSHLIRIALPGALAAALLASQVSQA). Substrate is bound by residues 65-66 (SK), 138-139 (HT), and Tyr256.

This sequence belongs to the polysaccharide lyase 5 family.

It localises to the periplasm. The enzyme catalyses Eliminative cleavage of alginate to give oligosaccharides with 4-deoxy-alpha-L-erythro-hex-4-enuronosyl groups at their non-reducing ends and beta-D-mannuronate at their reducing end.. In terms of biological role, catalyzes the depolymerization of alginate by cleaving the beta-1,4 glycosidic bond between two adjacent sugar residues via a beta-elimination mechanism. May serve to degrade mislocalized alginate that is trapped in the periplasmic space. This Pseudomonas aeruginosa (strain LESB58) protein is Alginate lyase.